Here is a 133-residue protein sequence, read N- to C-terminus: Small ribosomal subunit protein eS24z (133 aa).

The disordered stretch occupies residues 104–133 (KSRKQIKERKNRAKKIRGVKKTKAGDAKKK). Residues 109–125 (IKERKNRAKKIRGVKKT) show a composition bias toward basic residues.

The protein belongs to the eukaryotic ribosomal protein eS24 family.

This is Small ribosomal subunit protein eS24z (RPS24A) from Arabidopsis thaliana (Mouse-ear cress).